Reading from the N-terminus, the 443-residue chain is Tubulin beta-1/beta-2 chain (443 aa).

GTP is bound by residues Gln11, Glu69, Ser138, Gly142, Thr143, Gly144, Asn204, and Asn226. Glu69 serves as a coordination point for Mg(2+). The interval Gln424–Ala443 is disordered. A compositionally biased stretch (acidic residues) spans Ser429–Ala443.

This sequence belongs to the tubulin family. In terms of assembly, dimer of alpha and beta chains. A typical microtubule is a hollow water-filled tube with an outer diameter of 25 nm and an inner diameter of 15 nM. Alpha-beta heterodimers associate head-to-tail to form protofilaments running lengthwise along the microtubule wall with the beta-tubulin subunit facing the microtubule plus end conferring a structural polarity. Microtubules usually have 13 protofilaments but different protofilament numbers can be found in some organisms and specialized cells. Mg(2+) is required as a cofactor.

The protein localises to the cytoplasm. It localises to the cytoskeleton. Functionally, tubulin is the major constituent of microtubules, a cylinder consisting of laterally associated linear protofilaments composed of alpha- and beta-tubulin heterodimers. Microtubules grow by the addition of GTP-tubulin dimers to the microtubule end, where a stabilizing cap forms. Below the cap, tubulin dimers are in GDP-bound state, owing to GTPase activity of alpha-tubulin. The sequence is that of Tubulin beta-1/beta-2 chain (TUBB1) from Chlamydomonas reinhardtii (Chlamydomonas smithii).